The primary structure comprises 201 residues: dTTP/UTP pyrophosphatase (201 aa).

Aspartate 79 serves as the catalytic Proton acceptor.

Belongs to the Maf family. YhdE subfamily. It depends on a divalent metal cation as a cofactor.

The protein localises to the cytoplasm. The enzyme catalyses dTTP + H2O = dTMP + diphosphate + H(+). It catalyses the reaction UTP + H2O = UMP + diphosphate + H(+). In terms of biological role, nucleoside triphosphate pyrophosphatase that hydrolyzes dTTP and UTP. May have a dual role in cell division arrest and in preventing the incorporation of modified nucleotides into cellular nucleic acids. The polypeptide is dTTP/UTP pyrophosphatase (Hahella chejuensis (strain KCTC 2396)).